The primary structure comprises 140 residues: Putative pre-16S rRNA nuclease (140 aa).

Belongs to the YqgF nuclease family.

Its subcellular location is the cytoplasm. Could be a nuclease involved in processing of the 5'-end of pre-16S rRNA. The polypeptide is Putative pre-16S rRNA nuclease (Mycoplasma pneumoniae (strain ATCC 29342 / M129 / Subtype 1) (Mycoplasmoides pneumoniae)).